The primary structure comprises 246 residues: Mast cell protease-like protein (246 aa).

The first 18 residues, 1–18 (MQALLFLMALLLPSGAGA), serve as a signal peptide directing secretion. A propeptide spans 19–20 (EE) (activation peptide). Positions 21–244 (IIGGVESEPH…HVPWINRVIK (224 aa)) constitute a Peptidase S1 domain. Cys50 and Cys66 form a disulfide bridge. Residues His65 and Asp109 each act as charge relay system in the active site. Cystine bridges form between Cys143–Cys208 and Cys174–Cys187. The Charge relay system role is filled by Ser202.

The protein belongs to the peptidase S1 family. Granzyme subfamily.

The chain is Mast cell protease-like protein (Mcptl) from Mus musculus (Mouse).